A 205-amino-acid chain; its full sequence is Probable GTP-binding protein EngB (205 aa).

The 173-residue stretch at 22–194 folds into the EngB-type G domain; sequence ELPEIAFAGR…WESILDLCEI (173 aa). GTP-binding positions include 30–37, 57–61, 75–78, 142–145, and 173–175; these read GRSNVGKS, GRTQL, DLPG, TKAD, and FSA. 2 residues coordinate Mg(2+): Ser-37 and Thr-59.

Belongs to the TRAFAC class TrmE-Era-EngA-EngB-Septin-like GTPase superfamily. EngB GTPase family. The cofactor is Mg(2+).

Necessary for normal cell division and for the maintenance of normal septation. In Desulfatibacillum aliphaticivorans, this protein is Probable GTP-binding protein EngB.